The sequence spans 511 residues: NADH-ubiquinone oxidoreductase chain 4 (511 aa).

The next 14 helical transmembrane spans lie at Met1 to Ile21, Ile39 to Asn59, Ile78 to Ile98, Val116 to Ile136, Thr137 to Gly157, Tyr186 to Ile206, Ile220 to Val240, Ile264 to Ile284, Val289 to Gly309, Ile318 to Phe338, Leu349 to Ile369, Tyr388 to Leu408, Ile422 to Ile442, and Leu476 to Ile496.

Belongs to the complex I subunit 4 family.

It localises to the mitochondrion membrane. The enzyme catalyses a ubiquinone + NADH + 5 H(+)(in) = a ubiquinol + NAD(+) + 4 H(+)(out). In terms of biological role, core subunit of the mitochondrial membrane respiratory chain NADH dehydrogenase (Complex I) that is believed to belong to the minimal assembly required for catalysis. Complex I functions in the transfer of electrons from NADH to the respiratory chain. The immediate electron acceptor for the enzyme is believed to be ubiquinone. This chain is NADH-ubiquinone oxidoreductase chain 4 (ND4), found in Wickerhamomyces canadensis (Yeast).